The sequence spans 630 residues: Putative lipase atg15 (630 aa).

Topologically, residues 1-20 (MKSSQRRIKRHAMRDMSIST) are cytoplasmic. A helical; Signal-anchor for type II membrane protein membrane pass occupies residues 21–40 (LLLSVVLLPSVVSANDHVYF). Over 41–630 (NPPSPGSPFL…WGSDIEHYEI (590 aa)) the chain is Lumenal. N-linked (GlcNAc...) asparagine glycans are attached at residues Asn-200, Asn-222, Asn-280, and Asn-304. Ser-320 acts as the Charge relay system in catalysis. An N-linked (GlcNAc...) asparagine glycan is attached at Asn-466. The span at 577–589 (SVTAPPFSTSTSS) shows a compositional bias: polar residues. A disordered region spans residues 577–599 (SVTAPPFSTSTSSDHVRADHSIG).

The protein belongs to the AB hydrolase superfamily. Lipase family. In terms of assembly, binds to both phosphatidylinositol (PI) and phosphatidylinositol 3,5-bisphosphate (PIP2).

The protein localises to the endosome. Its subcellular location is the multivesicular body membrane. It is found in the prevacuolar compartment membrane. It catalyses the reaction a triacylglycerol + H2O = a diacylglycerol + a fatty acid + H(+). Functionally, lipase which is essential for lysis of subvacuolar cytoplasm to vacuole targeted bodies and intravacuolar autophagic bodies. Involved in the lysis of intravacuolar multivesicular body (MVB) vesicles. The intravacuolar membrane disintegration by atg15 is critical to life span extension. This chain is Putative lipase atg15 (atg15), found in Aspergillus clavatus (strain ATCC 1007 / CBS 513.65 / DSM 816 / NCTC 3887 / NRRL 1 / QM 1276 / 107).